A 347-amino-acid chain; its full sequence is Protein RecA (347 aa).

64–71 (GPESSGKT) contacts ATP.

The protein belongs to the RecA family.

Its subcellular location is the cytoplasm. In terms of biological role, can catalyze the hydrolysis of ATP in the presence of single-stranded DNA, the ATP-dependent uptake of single-stranded DNA by duplex DNA, and the ATP-dependent hybridization of homologous single-stranded DNAs. It interacts with LexA causing its activation and leading to its autocatalytic cleavage. This is Protein RecA from Bacillus velezensis (strain DSM 23117 / BGSC 10A6 / LMG 26770 / FZB42) (Bacillus amyloliquefaciens subsp. plantarum).